We begin with the raw amino-acid sequence, 226 residues long: MAPYHIRQFQDRDHRRVLDLFSRGMEEHVPAAFYHVLTLPHSLLLFPGVPVTIILVSGSWLLATVYSFLFLLCLRLIFWVSCRNYVAKCLQADLADITKSYLNAHGSFWVAESGGQVVGIVAALPVKEPPSGRKQLQLFRLSVSSQHRGQGIAKALVRIVLQFARDQGYTDVVLVTGNMQYSAISLYQGMGFQKTGHYFVSIAKRLIGLSIFHFTYSLPSVWEPRM.

The next 2 helical transmembrane spans lie at 33-55 (FYHVLTLPHSLLLFPGVPVTIIL) and 60-82 (WLLATVYSFLFLLCLRLIFWVSC). In terms of domain architecture, N-acetyltransferase spans 69–221 (LFLLCLRLIF…FHFTYSLPSV (153 aa)). At K204 the chain carries N6-acetyllysine.

Belongs to the camello family.

It localises to the membrane. Its function is as follows. Probable acetyltransferase. Has no detectable histone acetyltransferase activity towards histone H3 or H4. The sequence is that of N-acetyltransferase family 8 member 2 from Rattus norvegicus (Rat).